A 502-amino-acid polypeptide reads, in one-letter code: 2,3-bisphosphoglycerate-independent phosphoglycerate mutase (502 aa).

Mn(2+)-binding residues include aspartate 13 and serine 63. The Phosphoserine intermediate role is filled by serine 63. Residues histidine 117, 146–147, arginine 177, arginine 183, 251–254, and lysine 324 contribute to the substrate site; these read RD and RSDR. Positions 389, 393, 430, 431, and 448 each coordinate Mn(2+).

It belongs to the BPG-independent phosphoglycerate mutase family. As to quaternary structure, monomer. Requires Mn(2+) as cofactor.

The enzyme catalyses (2R)-2-phosphoglycerate = (2R)-3-phosphoglycerate. The protein operates within carbohydrate degradation; glycolysis; pyruvate from D-glyceraldehyde 3-phosphate: step 3/5. Catalyzes the interconversion of 2-phosphoglycerate and 3-phosphoglycerate. This chain is 2,3-bisphosphoglycerate-independent phosphoglycerate mutase, found in Ureaplasma urealyticum serovar 10 (strain ATCC 33699 / Western).